A 132-amino-acid polypeptide reads, in one-letter code: Snaclec bothroinsularin subunit alpha (132 aa).

Disulfide bonds link cysteine 2-cysteine 13, cysteine 30-cysteine 127, and cysteine 102-cysteine 119. Positions 9–128 (YGQYCYKFFQ…CGQQNPFVCK (120 aa)) constitute a C-type lectin domain.

This sequence belongs to the snaclec family. As to quaternary structure, heterodimer of subunits alpha and beta; disulfide-linked. As to expression, expressed by the venom gland.

It is found in the secreted. Its function is as follows. Thrombin and prothrombin (F2) inhibitor. The IC(50) of thrombin-induced platelet aggregation and fibrinocoagulation is 62 and 35 nM, respectively. Its inhibitory activity is at least 10-fold lower than that observed for other thrombin inhibitors. The protein is Snaclec bothroinsularin subunit alpha of Bothrops insularis (Golden lancehead).